Consider the following 54-residue polypeptide: uncharacterized protein (54 aa).

Residues 21–43 (SYVVCLYMCGSDCACICVLACVV) traverse the membrane as a helical segment.

The protein resides in the membrane. This is an uncharacterized protein from Saccharomyces cerevisiae (strain ATCC 204508 / S288c) (Baker's yeast).